The primary structure comprises 517 residues: Anthranilate--CoA ligase (517 aa).

Position 161–172 (161–172) interacts with AMP; that stretch reads LQYTSGSTGAPK.

Belongs to the ATP-dependent AMP-binding enzyme family. As to quaternary structure, monomer.

The enzyme catalyses anthranilate + ATP + CoA = anthraniloyl-CoA + AMP + diphosphate. Functionally, catalyzes the formation of anthraniloyl-CoA, which is the priming step for entry into the Pseudomonas quinolone signal (PQS) biosynthetic pathway. Also active on a variety of aromatic substrates, including benzoate and chloro and fluoro derivatives of anthranilate. The polypeptide is Anthranilate--CoA ligase (pqsA) (Pseudomonas aeruginosa (strain ATCC 15692 / DSM 22644 / CIP 104116 / JCM 14847 / LMG 12228 / 1C / PRS 101 / PAO1)).